A 240-amino-acid chain; its full sequence is Ribonuclease 3 (240 aa).

Positions 9-141 (VEELQKRLGV…LLAALYLDQG (133 aa)) constitute an RNase III domain. Glu54 serves as a coordination point for Mg(2+). The active site involves Asp58. Residues Asp127 and Glu130 each contribute to the Mg(2+) site. Residue Glu130 is part of the active site. The 70-residue stretch at 168-237 (DYKTALQEIV…ARKAYEKLVA (70 aa)) folds into the DRBM domain.

This sequence belongs to the ribonuclease III family. Homodimer. Mg(2+) serves as cofactor.

Its subcellular location is the cytoplasm. The enzyme catalyses Endonucleolytic cleavage to 5'-phosphomonoester.. In terms of biological role, digests double-stranded RNA. Involved in the processing of primary rRNA transcript to yield the immediate precursors to the large and small rRNAs (23S and 16S). Processes some mRNAs, and tRNAs when they are encoded in the rRNA operon. Processes pre-crRNA and tracrRNA of type II CRISPR loci if present in the organism. In Thermotoga neapolitana (strain ATCC 49049 / DSM 4359 / NBRC 107923 / NS-E), this protein is Ribonuclease 3.